A 413-amino-acid chain; its full sequence is Probable protein S-acyltransferase 3 (413 aa).

2 consecutive transmembrane segments (helical) span residues 65-85 (LTSF…LVWI) and 96-116 (VLAS…LTSA). The DHHC domain maps to 171 to 221 (KFCDTCLLYRPPRASHCSICNNCVQRFDHHCPWVGQCIARRNYPFFICFIS). Residue Cys-201 is the S-palmitoyl cysteine intermediate of the active site. The next 2 helical transmembrane spans lie at 216–236 (FICF…FSWI) and 255–275 (SVIL…LTIF). Residues 364–413 (RDSPRKLPLPTRNLDDIKDISDNYDRSTTTREDASDRDPSFFSSQLDLPK) form a disordered region. Over residues 376–402 (NLDDIKDISDNYDRSTTTREDASDRDP) the composition is skewed to basic and acidic residues. Residues 404 to 413 (FFSSQLDLPK) are compositionally biased toward polar residues.

It belongs to the DHHC palmitoyltransferase family. Expressed in flowers and pollen.

It is found in the endoplasmic reticulum membrane. The protein resides in the cytoplasmic vesicle membrane. It carries out the reaction L-cysteinyl-[protein] + hexadecanoyl-CoA = S-hexadecanoyl-L-cysteinyl-[protein] + CoA. Palmitoyl acyltransferase. This chain is Probable protein S-acyltransferase 3 (PAT03), found in Arabidopsis thaliana (Mouse-ear cress).